A 289-amino-acid polypeptide reads, in one-letter code: Acetyl-coenzyme A carboxylase carboxyl transferase subunit beta (289 aa).

Residues 27-289 (LWSKCPSCES…SFMRVPAGAA (263 aa)) enclose the CoA carboxyltransferase N-terminal domain. Residues Cys-31, Cys-34, Cys-50, and Cys-53 each contribute to the Zn(2+) site. The segment at 31–53 (CPSCESVLYRTDLESNSEVCPKC) adopts a C4-type zinc-finger fold.

The protein belongs to the AccD/PCCB family. In terms of assembly, acetyl-CoA carboxylase is a heterohexamer composed of biotin carboxyl carrier protein (AccB), biotin carboxylase (AccC) and two subunits each of ACCase subunit alpha (AccA) and ACCase subunit beta (AccD). It depends on Zn(2+) as a cofactor.

The protein resides in the cytoplasm. It catalyses the reaction N(6)-carboxybiotinyl-L-lysyl-[protein] + acetyl-CoA = N(6)-biotinyl-L-lysyl-[protein] + malonyl-CoA. Its pathway is lipid metabolism; malonyl-CoA biosynthesis; malonyl-CoA from acetyl-CoA: step 1/1. In terms of biological role, component of the acetyl coenzyme A carboxylase (ACC) complex. Biotin carboxylase (BC) catalyzes the carboxylation of biotin on its carrier protein (BCCP) and then the CO(2) group is transferred by the transcarboxylase to acetyl-CoA to form malonyl-CoA. In Methylobacillus flagellatus (strain ATCC 51484 / DSM 6875 / VKM B-1610 / KT), this protein is Acetyl-coenzyme A carboxylase carboxyl transferase subunit beta.